Here is a 173-residue protein sequence, read N- to C-terminus: Small ribosomal subunit protein uS4c (173 aa).

Positions 94-155 (SRLDSKIYRS…TKLTSELIEK (62 aa)) constitute an S4 RNA-binding domain.

It belongs to the universal ribosomal protein uS4 family. As to quaternary structure, part of the 30S ribosomal subunit. Contacts protein S5. The interaction surface between S4 and S5 is involved in control of translational fidelity.

Its subcellular location is the plastid. Functionally, one of the primary rRNA binding proteins, it binds directly to 16S rRNA where it nucleates assembly of the body of the 30S subunit. With S5 and S12 plays an important role in translational accuracy. The protein is Small ribosomal subunit protein uS4c (rps4) of Helicosporidium sp. subsp. Simulium jonesii (Green alga).